The following is a 343-amino-acid chain: Mitochondrial amidoxime-reducing component 1 (343 aa).

At 1-25 the chain is on the mitochondrial matrix side; the sequence is MSNTVFSGAVGPLRAAALSISRHRL. The chain crosses the membrane as a helical; Signal-anchor for type II membrane protein span at residues 26–44; that stretch reads PLLCAAGLGLTAVASWMWW. The Cytoplasmic portion of the chain corresponds to 45-343; it reads RKRQGEAEDL…DPVYRVTRKG (299 aa). Mo-molybdopterin contacts are provided by Lys69, Ser70, and Arg94. An MOSC N-terminal region region spans residues 95-186; the sequence is HWLVVTEEGN…SSQPYRLVHF (92 aa). The region spanning 181–339 is the MOSC domain; sequence YRLVHFEADV…IRVGDPVYRV (159 aa). 5 residues coordinate Mo-molybdopterin: Ser215, Arg242, Arg276, Cys277, and Tyr321.

It depends on Mo-molybdopterin as a cofactor.

It is found in the mitochondrion outer membrane. The protein resides in the membrane. The enzyme catalyses N(omega)-hydroxy-L-arginine + 2 Fe(II)-[cytochrome b5] + 2 H(+) = L-arginine + 2 Fe(III)-[cytochrome b5] + H2O. Its function is as follows. Catalyzes the reduction of N-oxygenated molecules, acting as a counterpart of cytochrome P450 and flavin-containing monooxygenases in metabolic cycles. As a component of prodrug-converting system, reduces a multitude of N-hydroxylated prodrugs particularly amidoximes, leading to increased drug bioavailability. May be involved in mitochondrial N(omega)-hydroxy-L-arginine (NOHA) reduction, regulating endogenous nitric oxide levels and biosynthesis. Postulated to cleave the N-OH bond of N-hydroxylated substrates in concert with electron transfer from NADH to cytochrome b5 reductase then to cytochrome b5, the ultimate electron donor that primes the active site for substrate reduction. The chain is Mitochondrial amidoxime-reducing component 1 (mtarc1) from Xenopus laevis (African clawed frog).